A 116-amino-acid polypeptide reads, in one-letter code: Large ribosomal subunit protein bL19 (116 aa).

Belongs to the bacterial ribosomal protein bL19 family.

Functionally, this protein is located at the 30S-50S ribosomal subunit interface and may play a role in the structure and function of the aminoacyl-tRNA binding site. In Pseudomonas fluorescens (strain ATCC BAA-477 / NRRL B-23932 / Pf-5), this protein is Large ribosomal subunit protein bL19.